Here is a 337-residue protein sequence, read N- to C-terminus: Glyceraldehyde-3-phosphate dehydrogenase (337 aa).

Residues 11 to 12 and G110 each bind NAD(+); that span reads TI. 139–141 is a binding site for D-glyceraldehyde 3-phosphate; the sequence is SCN. The active-site Nucleophile is C140. R168 is an NAD(+) binding site. Residue 194-195 participates in D-glyceraldehyde 3-phosphate binding; it reads HG. Position 301 (Q301) interacts with NAD(+).

The protein belongs to the glyceraldehyde-3-phosphate dehydrogenase family. As to quaternary structure, homotetramer.

The protein resides in the cytoplasm. The enzyme catalyses D-glyceraldehyde 3-phosphate + phosphate + NADP(+) = (2R)-3-phospho-glyceroyl phosphate + NADPH + H(+). The catalysed reaction is D-glyceraldehyde 3-phosphate + phosphate + NAD(+) = (2R)-3-phospho-glyceroyl phosphate + NADH + H(+). It participates in carbohydrate degradation; glycolysis; pyruvate from D-glyceraldehyde 3-phosphate: step 1/5. This Methanothermobacter thermautotrophicus (strain ATCC 29096 / DSM 1053 / JCM 10044 / NBRC 100330 / Delta H) (Methanobacterium thermoautotrophicum) protein is Glyceraldehyde-3-phosphate dehydrogenase (gap).